The following is a 240-amino-acid chain: Ribonuclease HII (240 aa).

An RNase H type-2 domain is found at 27–226 (GPVAGVDEAG…REARSLRLED (200 aa)). The a divalent metal cation site is built by Asp33, Glu34, and Asp127.

Belongs to the RNase HII family. Mn(2+) is required as a cofactor. Mg(2+) serves as cofactor.

The protein localises to the cytoplasm. It catalyses the reaction Endonucleolytic cleavage to 5'-phosphomonoester.. Functionally, endonuclease that specifically degrades the RNA of RNA-DNA hybrids. This chain is Ribonuclease HII, found in Frankia casuarinae (strain DSM 45818 / CECT 9043 / HFP020203 / CcI3).